We begin with the raw amino-acid sequence, 363 residues long: S-adenosylmethionine:tRNA ribosyltransferase-isomerase (363 aa).

It belongs to the QueA family. In terms of assembly, monomer.

Its subcellular location is the cytoplasm. The catalysed reaction is 7-aminomethyl-7-carbaguanosine(34) in tRNA + S-adenosyl-L-methionine = epoxyqueuosine(34) in tRNA + adenine + L-methionine + 2 H(+). The protein operates within tRNA modification; tRNA-queuosine biosynthesis. Transfers and isomerizes the ribose moiety from AdoMet to the 7-aminomethyl group of 7-deazaguanine (preQ1-tRNA) to give epoxyqueuosine (oQ-tRNA). This chain is S-adenosylmethionine:tRNA ribosyltransferase-isomerase, found in Magnetococcus marinus (strain ATCC BAA-1437 / JCM 17883 / MC-1).